The chain runs to 261 residues: Phosphonates import ATP-binding protein PhnC (261 aa).

An ABC transporter domain is found at 8-253; the sequence is LRVENLSKTY…WFRRIYGEGA (246 aa). 41–48 contributes to the ATP binding site; sequence GLSGSGKS.

It belongs to the ABC transporter superfamily. Phosphonates importer (TC 3.A.1.9.1) family. In terms of assembly, the complex is composed of two ATP-binding proteins (PhnC), two transmembrane proteins (PhnE) and a solute-binding protein (PhnD).

It is found in the cell inner membrane. The enzyme catalyses phosphonate(out) + ATP + H2O = phosphonate(in) + ADP + phosphate + H(+). Functionally, part of the ABC transporter complex PhnCDE involved in phosphonates import. Responsible for energy coupling to the transport system. The protein is Phosphonates import ATP-binding protein PhnC of Bdellovibrio bacteriovorus (strain ATCC 15356 / DSM 50701 / NCIMB 9529 / HD100).